A 568-amino-acid chain; its full sequence is Periplasmic pectate lyase (568 aa).

An N-terminal signal peptide occupies residues 1-19; sequence MKRFALSLLAGLVALQASA.

The protein belongs to the polysaccharide lyase 2 family.

The protein localises to the periplasm. The catalysed reaction is Eliminative cleavage of (1-&gt;4)-alpha-D-galacturonan to give oligosaccharides with 4-deoxy-alpha-D-galact-4-enuronosyl groups at their non-reducing ends.. Its pathway is glycan metabolism; pectin degradation; 2-dehydro-3-deoxy-D-gluconate from pectin: step 2/5. The protein is Periplasmic pectate lyase (pelB) of Pectobacterium carotovorum subsp. carotovorum (Erwinia carotovora subsp. carotovora).